A 336-amino-acid chain; its full sequence is Cytoskeleton protein RodZ (336 aa).

The Cytoplasmic portion of the chain corresponds to 1-111 (MNTEATHDQN…LGKRRKKRDG (111 aa)). An HTH cro/C1-type domain is found at 19-71 (LRNAREQLGLSQQAVAERLCLKVSTVRDIEEDKAPSDLASTFLRGYIRSYARL). Positions 30–49 (QQAVAERLCLKVSTVRDIEE) form a DNA-binding region, H-T-H motif. A helical; Signal-anchor for type II membrane protein transmembrane segment spans residues 112–132 (WLMSFTWLVLFVVVGLTGAWW). Topologically, residues 133–336 (WQNHKAQQEE…TLNAEPTPAQ (204 aa)) are periplasmic. Positions 155 to 243 (NADKDSGQSV…PSALPTSQAG (89 aa)) are disordered. Residues 161–175 (GQSVPLDTGAVTSQD) show a composition bias toward polar residues. Composition is skewed to low complexity over residues 176–214 (TTPA…VVAP) and 221–243 (TAAT…SQAG).

This sequence belongs to the RodZ family.

The protein resides in the cell inner membrane. Functionally, cytoskeletal protein that is involved in cell-shape control through regulation of the length of the long axis. This chain is Cytoskeleton protein RodZ, found in Salmonella newport (strain SL254).